Consider the following 227-residue polypeptide: Urease subunit gamma/beta (227 aa).

A urease gamma region spans residues 1–101; the sequence is MRLTPTERDR…LAVVTDPIGG (101 aa). The tract at residues 102 to 227 is urease beta; sequence GLGDQAPGAL…ACGYLGVEQR (126 aa).

The protein in the N-terminal section; belongs to the urease gamma subunit family. It in the C-terminal section; belongs to the urease beta subunit family. As to quaternary structure, heterohexamer of 3 UreC (alpha) and 3 UreAB (gamma/beta) subunits.

The protein resides in the cytoplasm. It catalyses the reaction urea + 2 H2O + H(+) = hydrogencarbonate + 2 NH4(+). The protein operates within nitrogen metabolism; urea degradation; CO(2) and NH(3) from urea (urease route): step 1/1. The protein is Urease subunit gamma/beta of Streptomyces avermitilis (strain ATCC 31267 / DSM 46492 / JCM 5070 / NBRC 14893 / NCIMB 12804 / NRRL 8165 / MA-4680).